Reading from the N-terminus, the 167-residue chain is Small ribosomal subunit protein uS5 (167 aa).

Residues 12-75 (LEERVVTINR…EDAKKNMVLV (64 aa)) form the S5 DRBM domain.

The protein belongs to the universal ribosomal protein uS5 family. Part of the 30S ribosomal subunit. Contacts proteins S4 and S8.

Its function is as follows. With S4 and S12 plays an important role in translational accuracy. In terms of biological role, located at the back of the 30S subunit body where it stabilizes the conformation of the head with respect to the body. This is Small ribosomal subunit protein uS5 from Listeria monocytogenes serotype 4b (strain F2365).